Consider the following 103-residue polypeptide: UPF0145 protein BC_5181 (103 aa).

It belongs to the UPF0145 family.

The chain is UPF0145 protein BC_5181 from Bacillus cereus (strain ATCC 14579 / DSM 31 / CCUG 7414 / JCM 2152 / NBRC 15305 / NCIMB 9373 / NCTC 2599 / NRRL B-3711).